The primary structure comprises 341 residues: Shk1 kinase-binding protein 15 (341 aa).

WD repeat units follow at residues 33–70, 77–114, 119–157, 197–234, and 237–274; these read AHEGALTALAVDGIYLASTSSDETIKIFDHTRNVQIAD, IANACIRDMCFTKNHLLACHDNGQISMWSKGSWLLVHT, SHKGITGIAVHPSEKLALTVGGDGKLRLWDLVRGKGGKV, SSKSQLNALCLYQSKLIVGRDNGTVLVLDTSDGKILHE, and AHKKRVKSVYPVDDYLITASSDGSVCIWDKDWNLVIEH. The segment at 293–341 is disordered; it reads NSEPKNVEDEAAKRQSLDSETSETSSESESESEYYSTSKQPPVKRTKHA. The span at 297–309 shows a compositional bias: basic and acidic residues; that stretch reads KNVEDEAAKRQSL.

Negatively regulates pak1/shk1 kinase activity leading to proper execution of cytoskeletal remodeling and cytokinetic functions. In terms of biological role, interacts with pak1/shk1. The protein is Shk1 kinase-binding protein 15 (skb15) of Schizosaccharomyces pombe (strain 972 / ATCC 24843) (Fission yeast).